Reading from the N-terminus, the 394-residue chain is RILP-like protein 1 (394 aa).

Residues 2-89 enclose the RH1 domain; sequence EGISALEKNV…RLERMDRIEK (88 aa). Residues 68–312 adopt a coiled-coil conformation; sequence EMEELRLELD…KVFMLQEELA (245 aa). An RH2 domain is found at 282-347; that stretch reads RPRFTLQELR…IPQESGIKRL (66 aa). Positions 318 to 337 are disordered; the sequence is EADEEHKLPQSSPVIDSKAP.

Belongs to the RILPL family.

It is found in the cytoplasm. The protein resides in the cytosol. It localises to the cytoskeleton. The protein localises to the microtubule organizing center. Its subcellular location is the centrosome. It is found in the cell projection. The protein resides in the cilium. In terms of biological role, plays a role in the regulation of cell shape and polarity. Plays a role in cellular protein transport, including protein transport away from primary cilia. Neuroprotective protein. In Xenopus tropicalis (Western clawed frog), this protein is RILP-like protein 1 (rilpl1).